Reading from the N-terminus, the 161-residue chain is Large ribosomal subunit protein uL15 (161 aa).

The tract at residues 1–42 (MKLSDIADNAGSRKKRMRVGRGIGSGKGKQSGRGGKGQTARS) is disordered. A compositionally biased stretch (gly residues) spans 21-37 (RGIGSGKGKQSGRGGKG).

It belongs to the universal ribosomal protein uL15 family. Part of the 50S ribosomal subunit.

Functionally, binds to the 23S rRNA. This Bradyrhizobium diazoefficiens (strain JCM 10833 / BCRC 13528 / IAM 13628 / NBRC 14792 / USDA 110) protein is Large ribosomal subunit protein uL15.